Consider the following 418-residue polypeptide: Histidine--tRNA ligase (418 aa).

It belongs to the class-II aminoacyl-tRNA synthetase family. In terms of assembly, homodimer.

The protein localises to the cytoplasm. It catalyses the reaction tRNA(His) + L-histidine + ATP = L-histidyl-tRNA(His) + AMP + diphosphate + H(+). This chain is Histidine--tRNA ligase, found in Thermosipho africanus (strain TCF52B).